The primary structure comprises 573 residues: Cytochrome P450 monooxygenase GME11363 (573 aa).

A helical transmembrane segment spans residues 10 to 30 (IGVVAAVLLAALILLYRAALP). Cysteine 519 contacts heme.

It belongs to the cytochrome P450 family. Heme is required as a cofactor.

The protein resides in the membrane. Its pathway is secondary metabolite biosynthesis. Its function is as follows. Cytochrome P450 monooxygenase; part of the gene cluster that mediates the biosynthesis of dibenzodioxocinones such as pestalotiollide B, a novel class of inhibitors against cholesterol ester transfer protein (CEPT). The biosynthesis initiates from condensation of acetate and malonate units catalyzed by the non-reducing PKS pks8/GME11356. Pks8/GME11356 lacks a thioesterase (TE) domain, which is important to the cyclizing of the third ring of atrochrysone carboxylic acid, and the esterase GME11355 might play the role of TE and catalyzes the cyclization reaction of the C ring. The lactamase-like protein GME11357 (or other beta-lactamases in Pestalotiopsis microspora) probably hydrolyzes the thioester bond between the ACP of pks8/GME11356 and the intermediate to release atrochrysone carboxylic acid, which is spontaneously dehydrates to form endocrocin anthrone. Endocrocin anthrone is further converted to emodin via the endocrocin intermediate. Emodin is then oxidized by several enzymes such as the Baeyer-Villiger oxidase GME11358, the oxidoreductase GME11367, the short chain dehydrogenase/reductase GME11373, as well as by other oxidoreductases from the cluster, to modify the A and C rings and open the B ring, and finally yield monodictyphenone. The prenyltransferase GME11375 may catalyze the addition reaction between the C5 side chains and the carbon bone of dibenzodioxocinones. The remaining biochemical reactions to the final product dibenzodioxocinones should be methylation catalyzed by methyltransferase GME11366 and reduction and lactonization reaction catalyzed by a series of oxidordeuctases. This chain is Cytochrome P450 monooxygenase GME11363, found in Pestalotiopsis microspora.